A 498-amino-acid chain; its full sequence is ATP synthase subunit beta, chloroplastic (498 aa).

172 to 179 (GGAGVGKT) is a binding site for ATP.

This sequence belongs to the ATPase alpha/beta chains family. As to quaternary structure, F-type ATPases have 2 components, CF(1) - the catalytic core - and CF(0) - the membrane proton channel. CF(1) has five subunits: alpha(3), beta(3), gamma(1), delta(1), epsilon(1). CF(0) has four main subunits: a(1), b(1), b'(1) and c(9-12).

Its subcellular location is the plastid. The protein localises to the chloroplast thylakoid membrane. The catalysed reaction is ATP + H2O + 4 H(+)(in) = ADP + phosphate + 5 H(+)(out). Its function is as follows. Produces ATP from ADP in the presence of a proton gradient across the membrane. The catalytic sites are hosted primarily by the beta subunits. In Hyophorbe lagenicaulis (Bottle palm), this protein is ATP synthase subunit beta, chloroplastic.